A 183-amino-acid polypeptide reads, in one-letter code: COMM domain-containing protein 8 (183 aa).

Residues 116-183 (QLQDFDWQVK…AANKVVLQLK (68 aa)) form the COMM domain.

Belongs to the COMM domain-containing protein 8 family. Component of the commander complex consisting of the CCC subcomplex and the retriever subcomplex. Component of the CCC (COMMD/CCDC22/CCDC93) subcomplex consisting of COMMD1, COMMD2, COMMD3, COMMD4, COMMD5, COMMD6, COMMD7, COMMD8, COMMD9, COMMD10, CCDC22 and CCDC93; within the complex forms a heterodimer with COMMD4. Interacts with RELA, RELB, NFKB1/p105. Interacts with CCDC22, CCDC93, SCNN1B, CUL1, CUL2, CUL3, CUL4A, CUL4B, CUL5. In terms of tissue distribution, widely expressed with highest expression in thyroid.

It localises to the cytoplasm. Its subcellular location is the nucleus. In terms of biological role, scaffold protein in the commander complex that is essential for endosomal recycling of transmembrane cargos; the commander complex is composed of the CCC subcomplex and the retriever subcomplex. May modulate activity of cullin-RING E3 ubiquitin ligase (CRL) complexes. May down-regulate activation of NF-kappa-B. This is COMM domain-containing protein 8 (COMMD8) from Homo sapiens (Human).